Reading from the N-terminus, the 319-residue chain is Ferrochelatase (319 aa).

Residues H192 and E271 each contribute to the Fe cation site.

Belongs to the ferrochelatase family.

The protein resides in the cytoplasm. The catalysed reaction is heme b + 2 H(+) = protoporphyrin IX + Fe(2+). The protein operates within porphyrin-containing compound metabolism; protoheme biosynthesis; protoheme from protoporphyrin-IX: step 1/1. In terms of biological role, catalyzes the ferrous insertion into protoporphyrin IX. The polypeptide is Ferrochelatase (Geotalea uraniireducens (strain Rf4) (Geobacter uraniireducens)).